The following is an 87-amino-acid chain: uncharacterized protein (87 aa).

Belongs to the YlmC/YmxH family.

This is an uncharacterized protein from Clostridium acetobutylicum (strain ATCC 824 / DSM 792 / JCM 1419 / IAM 19013 / LMG 5710 / NBRC 13948 / NRRL B-527 / VKM B-1787 / 2291 / W).